Here is a 310-residue protein sequence, read N- to C-terminus: ADP-L-glycero-D-manno-heptose-6-epimerase (310 aa).

NADP(+) contacts are provided by residues Phe10 to Ile11, Asp31 to Asn32, Lys38, Lys53, Glu75 to Ser79, and Asn92. Residue Tyr140 is the Proton acceptor of the active site. Lys144 serves as a coordination point for NADP(+). Asn169 contributes to the substrate binding site. Val170 and Lys178 together coordinate NADP(+). The active-site Proton acceptor is Lys178. Substrate-binding positions include Ser180, His187, Phe201–Ser204, Arg209, and Tyr272.

It belongs to the NAD(P)-dependent epimerase/dehydratase family. HldD subfamily. In terms of assembly, homopentamer. NADP(+) serves as cofactor.

It catalyses the reaction ADP-D-glycero-beta-D-manno-heptose = ADP-L-glycero-beta-D-manno-heptose. Its pathway is nucleotide-sugar biosynthesis; ADP-L-glycero-beta-D-manno-heptose biosynthesis; ADP-L-glycero-beta-D-manno-heptose from D-glycero-beta-D-manno-heptose 7-phosphate: step 4/4. Functionally, catalyzes the interconversion between ADP-D-glycero-beta-D-manno-heptose and ADP-L-glycero-beta-D-manno-heptose via an epimerization at carbon 6 of the heptose. The chain is ADP-L-glycero-D-manno-heptose-6-epimerase from Salmonella paratyphi C (strain RKS4594).